The sequence spans 247 residues: Probable transcriptional regulatory protein BHWA1_01533 (247 aa).

The interval Met-1–Gly-22 is disordered.

It belongs to the TACO1 family.

Its subcellular location is the cytoplasm. The polypeptide is Probable transcriptional regulatory protein BHWA1_01533 (Brachyspira hyodysenteriae (strain ATCC 49526 / WA1)).